Here is a 467-residue protein sequence, read N- to C-terminus: Asparagine--tRNA ligase (467 aa).

The protein belongs to the class-II aminoacyl-tRNA synthetase family. Homodimer.

Its subcellular location is the cytoplasm. It catalyses the reaction tRNA(Asn) + L-asparagine + ATP = L-asparaginyl-tRNA(Asn) + AMP + diphosphate + H(+). This chain is Asparagine--tRNA ligase, found in Legionella pneumophila (strain Corby).